A 254-amino-acid chain; its full sequence is Major prion protein (254 aa).

Residues 1-22 (MANLGYWLLALFVTMWTDVGLC) form the signal peptide. The segment at 23 to 38 (KKRPKPGGWNTGGSRY) is interaction with ADGRG6. An interaction with GRB2, ERI3 and SYN1 region spans residues 23 to 231 (KKRPKPGGWN…QAYYDGRRSS (209 aa)). Residues 25-104 (RPKPGGWNTG…HNQWNKPSKP (80 aa)) are disordered. The residue at position 44 (Pro44) is a Hydroxyproline. Tandem repeats lie at residues 51-58 (PQGGTWGQ), 59-66 (PHGGGWGQ), 67-74 (PHGGSWGQ), 75-82 (PHGGSWGQ), and 83-90 (PHGGGWGQ). Positions 51–90 (PQGGTWGQPHGGGWGQPHGGSWGQPHGGSWGQPHGGGWGQ) are 5 X 8 AA tandem repeats of P-H-G-G-G-W-G-Q. Residues 54-94 (GTWGQPHGGGWGQPHGGSWGQPHGGSWGQPHGGGWGQGGGT) are compositionally biased toward gly residues. Cu(2+)-binding residues include His60, Gly61, Gly62, His68, Gly69, Gly70, His76, Gly77, Gly78, His84, Gly85, and Gly86. A disulfide bridge links Cys178 with Cys213. Asn180 and Asn196 each carry an N-linked (GlcNAc...) asparagine glycan. Ser230 carries GPI-anchor amidated serine lipidation. Residues 231-254 (SSTVLFSSPPVILLISFLIFLIVG) constitute a propeptide, removed in mature form.

This sequence belongs to the prion family. As to quaternary structure, monomer and homodimer. Has a tendency to aggregate into amyloid fibrils containing a cross-beta spine, formed by a steric zipper of superposed beta-strands. Soluble oligomers may represent an intermediate stage on the path to fibril formation. Copper binding may promote oligomerization. Interacts with GRB2, APP, ERI3/PRNPIP and SYN1. Mislocalized cytosolically exposed PrP interacts with MGRN1; this interaction alters MGRN1 subcellular location and causes lysosomal enlargement. Interacts with APP. Interacts with KIAA1191. Interacts with ADGRG6. In terms of processing, N-glycosylated. In terms of tissue distribution, highly expressed in the brain, lung, kidney and heart. Expressed at low levels in the liver and spleen.

The protein localises to the cell membrane. It is found in the golgi apparatus. Its primary physiological function is unclear. May play a role in neuronal development and synaptic plasticity. May be required for neuronal myelin sheath maintenance. May promote myelin homeostasis through acting as an agonist for ADGRG6 receptor. May play a role in iron uptake and iron homeostasis. Soluble oligomers are toxic to cultured neuroblastoma cells and induce apoptosis (in vitro). Association with GPC1 (via its heparan sulfate chains) targets PRNP to lipid rafts. Also provides Cu(2+) or Zn(2+) for the ascorbate-mediated GPC1 deaminase degradation of its heparan sulfate side chains. This is Major prion protein (Prnp) from Mus musculus (Mouse).